Here is a 1140-residue protein sequence, read N- to C-terminus: TBC1 domain family member 8 (1140 aa).

GRAM domains are found at residues 145-212 and 285-353; these read VKFE…ERTS and EFFR…EKME. The Rab-GAP TBC domain maps to 505 to 692; that stretch reads GIPESLRGRL…NVVDCFFYDG (188 aa). The segment at 1031 to 1070 is disordered; sequence GQRGSSSGSCSQECGEELRASAPSPEDSVFADTGKTPQDS. Low complexity predominate over residues 1032–1043; sequence QRGSSSGSCSQE.

Its function is as follows. May act as a GTPase-activating protein for Rab family protein(s). This is TBC1 domain family member 8 (TBC1D8) from Homo sapiens (Human).